The sequence spans 572 residues: Cytochrome P450 monooxygenase xilC (572 aa).

Residue cysteine 515 coordinates heme.

It belongs to the cytochrome P450 family. Requires heme as cofactor.

It participates in secondary metabolite biosynthesis. In terms of biological role, cytochrome P450 monooxygenase; part of the gene cluster that mediates the biosynthesis of the 6-methyl-2-pyrone derivative xylariolide D. XilC hydroxylates the 5-alkyl-6-methyl-2-pyrone backbone called prexylariolide D, produced by the highly reducing polyketide synthase xilA, on its side chain to form xylariolide D. This is Cytochrome P450 monooxygenase xilC from Penicillium rubens (strain ATCC 28089 / DSM 1075 / NRRL 1951 / Wisconsin 54-1255) (Penicillium chrysogenum).